The chain runs to 220 residues: Mediator of RNA polymerase II transcription subunit 19 (220 aa).

The tract at residues 171–220 (AFDLDGTGKSQSGSNSGNNSKKRKNKSSGSSMATPTHSDSHEDMKRRRLE) is disordered. Positions 178 to 189 (GKSQSGSNSGNN) are enriched in low complexity. Residues 208-220 (SDSHEDMKRRRLE) are compositionally biased toward basic and acidic residues.

The protein belongs to the Mediator complex subunit 19 family. Component of the Mediator complex, which is composed of at least 21 subunits that form three structurally distinct submodules. The Mediator head module contains MED6, MED8, MED11, SRB4/MED17, SRB5/MED18, ROX3/MED19, SRB2/MED20 and SRB6/MED22, the middle module contains MED1, MED4, NUT1/MED5, MED7, CSE2/MED9, NUT2/MED10, SRB7/MED21 and SOH1/MED31, and the tail module contains MED2, PGD1/MED3, RGR1/MED14, GAL11/MED15 and SIN4/MED16. The head and the middle modules interact directly with RNA polymerase II, whereas the elongated tail module interacts with gene-specific regulatory proteins.

Its subcellular location is the nucleus. Its function is as follows. Component of the Mediator complex, a coactivator involved in the regulated transcription of nearly all RNA polymerase II-dependent genes. Mediator functions as a bridge to convey information from gene-specific regulatory proteins to the basal RNA polymerase II transcription machinery. The Mediator complex, having a compact conformation in its free form, is recruited to promoters by direct interactions with regulatory proteins and serves for the assembly of a functional preinitiation complex with RNA polymerase II and the general transcription factors. The Mediator complex unfolds to an extended conformation and partially surrounds RNA polymerase II, specifically interacting with the unphosphorylated form of the C-terminal domain (CTD) of RNA polymerase II. The Mediator complex dissociates from the RNA polymerase II holoenzyme and stays at the promoter when transcriptional elongation begins. The chain is Mediator of RNA polymerase II transcription subunit 19 (ROX3) from Saccharomyces cerevisiae (strain ATCC 204508 / S288c) (Baker's yeast).